The following is a 74-amino-acid chain: Translational regulator CsrA (74 aa).

The protein belongs to the CsrA/RsmA family. In terms of assembly, homodimer; the beta-strands of each monomer intercalate to form a hydrophobic core, while the alpha-helices form wings that extend away from the core.

It localises to the cytoplasm. A translational regulator that binds mRNA to regulate translation initiation and/or mRNA stability. Usually binds in the 5'-UTR at or near the Shine-Dalgarno sequence preventing ribosome-binding, thus repressing translation. Its main target seems to be the major flagellin gene, while its function is anatagonized by FliW. The protein is Translational regulator CsrA of Bacillus velezensis (strain DSM 23117 / BGSC 10A6 / LMG 26770 / FZB42) (Bacillus amyloliquefaciens subsp. plantarum).